A 197-amino-acid chain; its full sequence is uncharacterized protein (197 aa).

The PfpI endopeptidase domain maps to 29 to 166; it reads DWSVHTVSLD…FTNLILEMID (138 aa). The active-site Nucleophile is the Cys-98.

Belongs to the peptidase C56 family.

This is an uncharacterized protein from Bacillus subtilis (strain 168).